Reading from the N-terminus, the 649-residue chain is Endoplasmic reticulum chaperone BiP (649 aa).

The N-terminal stretch at 1–20 (MGLSTYVGTFLLCILTLSHC) is a signal peptide. Residues 36 to 39 (GTTY), K96, 226 to 228 (GGT), 292 to 299 (EKAKRTLS), and 363 to 366 (GSTR) contribute to the ATP site. Positions 125–279 (KPYMKVQVGS…KKKEGKDITK (155 aa)) are nucleotide-binding (NBD). The substrate-binding (SBD) stretch occupies residues 399–499 (VQAGVISGVE…PRGLPQIEVT (101 aa)). Residues 646-649 (KEEL) carry the Prevents secretion from ER motif.

Belongs to the heat shock protein 70 family.

It is found in the endoplasmic reticulum lumen. The enzyme catalyses ATP + H2O = ADP + phosphate + H(+). The chaperone activity is regulated by ATP-induced allosteric coupling of the nucleotide-binding (NBD) and substrate-binding (SBD) domains. In the ADP-bound and nucleotide-free (apo) states, the two domains have little interaction. In contrast, in the ATP-bound state the two domains are tightly coupled, which results in drastically accelerated kinetics in both binding and release of polypeptide substrates. J domain-containing co-chaperones stimulate the ATPase activity and are required for efficient substrate recognition. In terms of biological role, endoplasmic reticulum chaperone that plays a key role in protein folding and quality control in the endoplasmic reticulum lumen. Involved in the correct folding of proteins and degradation of misfolded proteins. Acts as a key repressor of the unfolded protein response (UPR). The protein is Endoplasmic reticulum chaperone BiP of Echinococcus multilocularis (Fox tapeworm).